Here is a 753-residue protein sequence, read N- to C-terminus: MEQRGWTLQCTAFAFFCVWCALSSVKAKRQFVNEWAAEIPGGQEAASAIAEELGYDLLGQIGSLENHYLFKHKSHPRRSRRSALHITKRLSDDDRVTWAEQQYEKERSKRSVQKDSALDLFNDPMWNQQWYLQDTRMTAALPKLDLHVIPVWEKGITGKGVVITVLDDGLEWNHTDIYANYDPEASYDFNDNDHDPFPRYDLTNENKHGTRCAGEIAMQANNHKCGVGVAYNSKVGGIRMLDGIVTDAIEASSIGFNPGHVDIYSASWGPNDDGKTVEGPGRLAQKAFEYGVKQGRQGKGSIFVWASGNGGRQGDNCDCDGYTDSIYTISISSASQQGLSPWYAEKCSSTLATSYSSGDYTDQRITSADLHNDCTETHTGTSASAPLAAGIFALALEANPNLTWRDMQHLVVWTSEYDPLASNPGWKKNGAGLMVNSRFGFGLLNAKALVDLADPRTWRNVPEKKECVVKDNNFEPRALKANGEVIVEIPTRACEGQENAIKSLEHVQFEATIEYSRRGDLHVTLTSAVGTSTVLLAERERDTSPNGFKNWDFMSVHTWGENPVGTWTLKITDMSGRMQNEGRIVNWKLILHGTSSQPEHMKQPRVYTSYNTVQNDRRGVEKMVNVVEKRPTQKSLNGNLLVPKNSSSSNVEGRRDEQVQGTPSKAMLRLLQSAFSKNALSKQSPKKSPSAKLSIPYESFYEALEKLNKPSKLEGSEDSLYSDYVDVFYNTKPYKHRDDRLLQALMDILNEEN.

The first 27 residues, 1–27, serve as a signal peptide directing secretion; sequence MEQRGWTLQCTAFAFFCVWCALSSVKA. Positions 28 to 110 are excised as a propeptide; the sequence is KRQFVNEWAA…QQYEKERSKR (83 aa). A Peptidase S8 domain is found at 129–450; it reads QWYLQDTRMT…FGLLNAKALV (322 aa). Residues Asp-167 and His-208 each act as charge relay system in the active site. Intrachain disulfides connect Cys-225/Cys-374 and Cys-317/Cys-347. Ser-382 serves as the catalytic Charge relay system. N-linked (GlcNAc...) asparagine glycosylation occurs at Asn-401. Residues 460–597 enclose the P/Homo B domain; that stretch reads NVPEKKECVV…KLILHGTSSQ (138 aa). A disulfide bond links Cys-467 and Cys-494. A compositionally biased stretch (polar residues) spans 633 to 651; it reads QKSLNGNLLVPKNSSSSNV. Residues 633–663 form a disordered region; sequence QKSLNGNLLVPKNSSSSNVEGRRDEQVQGTP. Asn-645 carries an N-linked (GlcNAc...) asparagine glycan.

It belongs to the peptidase S8 family. Furin subfamily. It depends on Ca(2+) as a cofactor.

It localises to the cytoplasmic vesicle. The protein localises to the secretory vesicle. It carries out the reaction Release of protein hormones, neuropeptides and renin from their precursors, generally by hydrolysis of -Lys-Arg-|- bonds.. In terms of biological role, involved in the processing of hormone and other protein precursors at sites comprised of pairs of basic amino acid residues. Substrates include POMC, renin, enkephalin, dynorphin, somatostatin, insulin and AGRP. The sequence is that of Neuroendocrine convertase 1 (Pcsk1) from Mus cookii (Cook's mouse).